Consider the following 154-residue polypeptide: Myoglobin (154 aa).

The Globin domain maps to G2–K148. S4 carries the post-translational modification Phosphoserine. Residue H65 participates in nitrite binding. An O2-binding site is contributed by H65. T68 carries the phosphothreonine modification. H94 provides a ligand contact to heme b.

The protein belongs to the globin family. As to quaternary structure, monomeric.

It localises to the cytoplasm. The protein localises to the sarcoplasm. The enzyme catalyses Fe(III)-heme b-[protein] + nitric oxide + H2O = Fe(II)-heme b-[protein] + nitrite + 2 H(+). It carries out the reaction H2O2 + AH2 = A + 2 H2O. In terms of biological role, monomeric heme protein which primary function is to store oxygen and facilitate its diffusion within muscle tissues. Reversibly binds oxygen through a pentacoordinated heme iron and enables its timely and efficient release as needed during periods of heightened demand. Depending on the oxidative conditions of tissues and cells, and in addition to its ability to bind oxygen, it also has a nitrite reductase activity whereby it regulates the production of bioactive nitric oxide. Under stress conditions, like hypoxia and anoxia, it also protects cells against reactive oxygen species thanks to its pseudoperoxidase activity. This chain is Myoglobin (MB), found in Phocoenoides dalli dalli (Dall's porpoise).